The sequence spans 154 residues: MSAEKKKELQVAALENGTAIDHIPPSQLFKVASLLGLEKMNNTITIGNNFHSNKMGCKGMIKIADKFFEEDEINRIAMIAPNIILNIIRDYEVVEKKTVTLPDELIGLVKCNNPKCITNNEPMLSRFHVIDKEKGTIKCHYCERKINKEDIIIK.

Zn(2+) contacts are provided by C111, C116, C139, and C142.

Belongs to the PyrI family. Contains catalytic and regulatory chains. The cofactor is Zn(2+).

Functionally, involved in allosteric regulation of aspartate carbamoyltransferase. The protein is Aspartate carbamoyltransferase regulatory chain of Parabacteroides distasonis (strain ATCC 8503 / DSM 20701 / CIP 104284 / JCM 5825 / NCTC 11152).